Reading from the N-terminus, the 47-residue chain is uncharacterized protein (47 aa).

The disordered stretch occupies residues 19–47 (EKVLKNQNPDRLSHMTDKNAQPKSKEKEE).

This is an uncharacterized protein from Bacillus subtilis (strain 168).